The following is a 369-amino-acid chain: NAD-dependent epimerase/dehydratase FUM13 (369 aa).

Residue Tyr176 participates in NADP(+) binding.

The protein belongs to the NAD(P)-dependent epimerase/dehydratase family. Dihydroflavonol-4-reductase subfamily.

The protein operates within mycotoxin biosynthesis. NAD-dependent epimerase/dehydratase; part of the gene cluster that mediates the biosynthesis of fumonisins B1 (FB1), B2 (FB2), B3 (FB3), and B4 (FB4), which are carcinogenic mycotoxins. Within the pathway, FUM13 stereospecifically reduces the intermediate 3-keto intermediate 2-amino-3-oxo-12,16-dimethylicosane to the 3-hydroxyl product 2-amino-3-hydroxy-12,16-dimethylicosane. The biosynthesis starts with the FUM1-catalyzed carbon chain assembly from one molecule of acetyl-CoA, eight molecules of malonyl-CoA, and two molecules of methionine (in S-adenosyl form). The C18 polyketide chain is released from the enzyme by a nucleophilic attack of a carbanion, which is derived from R-carbon of alanine by decarboxylation, on the carbonyl carbon of polyketide acyl chain. This step is catalyzed by the pyridoxal 5'-phosphate-dependent aminoacyl transferase FUM8. The resultant 3-keto intermediate is then stereospecifically reduced to a 3-hydroxyl product by reductase FUM13. Subsequent oxidations at C-10 by the cytochrome P450 monooxygenase FUM2, C-14 and C-15 by FUM6, FUM12 or FUM15, tricarballylic esterification of the hydroxyl groups on C-14 and C-15 by acyltransferase FUM14, and C-5 hydroxylation by 2-keto-glutarate-dependent dioxygenase FUM3 furnish the biosynthesis of fumonisins. The tricarballylic moieties are most likely derived from the citric acid cycle, and their addition to the carbon backbone may involve FUM7, FUM10, FUM11 and FUM14. This chain is NAD-dependent epimerase/dehydratase FUM13, found in Gibberella moniliformis (strain M3125 / FGSC 7600) (Maize ear and stalk rot fungus).